Here is a 67-residue protein sequence, read N- to C-terminus: Metallothionein-B (67 aa).

Belongs to the metallothionein superfamily. Type 4 family.

Its function is as follows. Metallothioneins have a high content of cysteine residues that bind various heavy metals. This is Metallothionein-B from Sphaerechinus granularis (Purple sea urchin).